A 367-amino-acid chain; its full sequence is Alanine racemase (367 aa).

The Proton acceptor; specific for D-alanine role is filled by K35. K35 carries the post-translational modification N6-(pyridoxal phosphate)lysine. R130 contributes to the substrate binding site. The active-site Proton acceptor; specific for L-alanine is the Y256. M304 serves as a coordination point for substrate.

The protein belongs to the alanine racemase family. It depends on pyridoxal 5'-phosphate as a cofactor.

It carries out the reaction L-alanine = D-alanine. It participates in amino-acid biosynthesis; D-alanine biosynthesis; D-alanine from L-alanine: step 1/1. In terms of biological role, catalyzes the interconversion of L-alanine and D-alanine. May also act on other amino acids. The chain is Alanine racemase (alr) from Methylibium petroleiphilum (strain ATCC BAA-1232 / LMG 22953 / PM1).